Here is a 500-residue protein sequence, read N- to C-terminus: Cytochrome P450 81F1 (500 aa).

A helical transmembrane segment spans residues 1-21; the sequence is MLYFILLPLLFLVISYKFLYS. K248 participates in a covalent cross-link: Glycyl lysine isopeptide (Lys-Gly) (interchain with G-Cter in ubiquitin). Residue C438 participates in heme binding.

This sequence belongs to the cytochrome P450 family. Requires heme as cofactor.

It localises to the membrane. It functions in the pathway secondary metabolite biosynthesis. Functionally, involved in indole glucosinolate biosynthesis. Catalyzes hydroxylation reactions of the glucosinolate indole ring. Converts indol-3-yl-methylglucosinolate (I3M) to 4-hydroxy-indol-3-yl-methylglucosinolate (4OH-I3M) and/or 1-hydroxy-indol-3-yl-methylglucosinolate (1OH-I3M) intermediates. These hydroxy intermediates are converted to 4-methoxy-indol-3-yl-methylglucosinolate (4MO-I3M) and 1-methoxy-indol-3-yl-methylglucosinolate (1MO-I3M) by indole glucosinolate methyltransferase 1 and 2 (IGMT1 and IGMT2). This chain is Cytochrome P450 81F1, found in Arabidopsis thaliana (Mouse-ear cress).